A 497-amino-acid polypeptide reads, in one-letter code: Bloodstream-specific protein 2 (497 aa).

Residues 1–14 form the signal peptide; that stretch reads MRAIFLVALALATM. In terms of domain architecture, Thioredoxin 1 spans 15–124; it reads RESTAESLKL…IIKYIKANVG (110 aa). Asparagine 30 is a glycosylation site (N-linked (GlcNAc...) asparagine). Residues cysteine 48 and cysteine 51 are joined by a disulfide bond. Asparagine 63, asparagine 85, asparagine 153, asparagine 154, asparagine 250, and asparagine 278 each carry an N-linked (GlcNAc...) asparagine glycan. One can recognise a Thioredoxin 2 domain in the interval 334–455; it reads EPTIKSLPVP…VYEFVRKHVT (122 aa). Active-site nucleophile residues include cysteine 378 and cysteine 381. Cysteine 378 and cysteine 381 form a disulfide bridge. Asparagine 413, asparagine 465, asparagine 476, asparagine 482, asparagine 485, and asparagine 488 each carry an N-linked (GlcNAc...) asparagine glycan. Positions 461 to 497 are disordered; it reads EKPANVTEEKKSEEENKSSKSNESNDSNESNVDKQDL. The segment covering 467–480 has biased composition (basic and acidic residues); the sequence is TEEKKSEEENKSSK. Positions 481 to 490 are enriched in low complexity; that stretch reads SNESNDSNES.

The protein belongs to the protein disulfide isomerase family.

This chain is Bloodstream-specific protein 2 (BS2), found in Trypanosoma brucei brucei.